The chain runs to 396 residues: Ribosomal RNA large subunit methyltransferase I (396 aa).

The 80-residue stretch at 2-81 folds into the PUA domain; it reads TVRLFLAKGR…EEINIEFFIR (80 aa).

Belongs to the methyltransferase superfamily. RlmI family.

It localises to the cytoplasm. The catalysed reaction is cytidine(1962) in 23S rRNA + S-adenosyl-L-methionine = 5-methylcytidine(1962) in 23S rRNA + S-adenosyl-L-homocysteine + H(+). In terms of biological role, specifically methylates the cytosine at position 1962 (m5C1962) of 23S rRNA. This is Ribosomal RNA large subunit methyltransferase I from Serratia proteamaculans (strain 568).